The sequence spans 867 residues: cGMP-dependent 3',5'-cGMP phosphodiesterase A (867 aa).

Residues 121–146 show a composition bias toward low complexity; that stretch reads IINSSSSTTDTSKTSPIKKQTSSSSP. 2 disordered regions span residues 121–167 and 180–241; these read IINS…SQQQ and HHHH…STFP. Residues 147–160 show a composition bias toward pro residues; sequence PLSPQQQQPPPPLV. The span at 191–220 shows a compositional bias: low complexity; it reads NDNNNNTTTNNNNIEILEQQQQQQQQQQQQ. A compositionally biased stretch (acidic residues) spans 221 to 232; sequence QDEDSTDVDEEF. The phosphodiesterase activity stretch occupies residues 357–503; it reads STTGFVLWIN…GDTCYDPNRI (147 aa). Residues His399, His401, and Asp403 each coordinate a divalent metal cation. A nucleoside 3',5'-cyclic phosphate contacts are provided by residues 607-721 and 734-851; these read IFRS…WEMR and VFSR…IFVD.

Belongs to the metallo-beta-lactamase superfamily. cNMP phosphodiesterase family. It depends on Mn(2+) as a cofactor. The cofactor is Mg(2+). Zn(2+) serves as cofactor.

It localises to the cytoplasm. It is found in the cytosol. It carries out the reaction 3',5'-cyclic GMP + H2O = GMP + H(+). Functionally, phosphodiesterase specific for cGMP, which is activated by cGMP but not by cAMP. Involved in the degradation of intracellular cGMP, contributes to the control of cGMP signals. This Dictyostelium discoideum (Social amoeba) protein is cGMP-dependent 3',5'-cGMP phosphodiesterase A (pdeD).